Consider the following 152-residue polypeptide: Pertussis toxin subunit 4 (152 aa).

Positions 1-42 (MLRRFPTRTTAPGQGGARRSRVRALAWLLASGAMTHLSPALA) are cleaved as a signal peptide. 2 cysteine pairs are disulfide-bonded: cysteine 73/cysteine 93 and cysteine 145/cysteine 151.

In terms of assembly, pertussis toxin contains five different chains, S1-S5. They are organized into 2 functional subunits: A, composed of S1 (which is toxic) and B, containing S2, S3, S5, and two copies of S4 (B binds to the membrane receptors). Dimers of S2-S4 and S3-S4 are held together by S5.

The protein localises to the secreted. Its subcellular location is the host cell membrane. In terms of biological role, PTX oligomer B binds to receptors on the eukaryotic cell surface and facilitates the translocation of the toxic subunit across the cell membrane. The polypeptide is Pertussis toxin subunit 4 (ptxD) (Bordetella parapertussis (strain 12822 / ATCC BAA-587 / NCTC 13253)).